A 462-amino-acid polypeptide reads, in one-letter code: Arginine-specific demethylase JMJ20 (462 aa).

The JmjC domain maps to 115–287; that stretch reads VKEYPDYTAY…WVWDLLWKDY (173 aa). 3 residues coordinate Fe cation: H177, D179, and H255.

This sequence belongs to the JARID1 histone demethylase family. Requires Fe(2+) as cofactor. As to expression, mostly expressed in leaves, and, to a lower extent, in inflorescences, roots, siliques and stems.

It localises to the nucleus. It catalyses the reaction N(omega),N(omega)-dimethyl-L-arginyl-[protein] + 2-oxoglutarate + O2 = N(omega)-methyl-L-arginyl-[protein] + formaldehyde + succinate + CO2. Functionally, histone demethylase that demethylates 'Arg-3' (H4R3me) of histone H4 with a specific activity for H4R3me2. Involved in the positive regulation of gene expression. Together with JMJ22, positively regulates seed germination by promoting the removal of repressive histone arginine methylations (e.g. H4R3me2) at GA3ox1 and GA3ox2 to trigger gibberellic acid (GA) biosynthesis. The chain is Arginine-specific demethylase JMJ20 from Arabidopsis thaliana (Mouse-ear cress).